A 93-amino-acid chain; its full sequence is Small ribosomal subunit protein uS19c (93 aa).

It belongs to the universal ribosomal protein uS19 family.

The protein resides in the plastid. Its subcellular location is the chloroplast. In terms of biological role, protein S19 forms a complex with S13 that binds strongly to the 16S ribosomal RNA. This chain is Small ribosomal subunit protein uS19c, found in Oryza nivara (Indian wild rice).